Here is a 1486-residue protein sequence, read N- to C-terminus: Protein PRRC2B (1486 aa).

5 disordered regions span residues 1–20 (MSDR…KYST), 39–306 (VIPR…FPLP), 320–341 (QMND…PLRQ), 385–519 (KFSD…AREE), and 531–658 (LDQK…EQLY). Over residues 88–137 (ANKQDQQDPKSSSVTASQPPESQPQPGLQKSVSNLQKPTQSISQENTNSV) the composition is skewed to polar residues. Ser166, Ser168, Ser222, and Ser226 each carry phosphoserine. Polar residues predominate over residues 219-235 (SAASLSASPTELGSRNA). Thr228 carries the phosphothreonine modification. A Glycyl lysine isopeptide (Lys-Gly) (interchain with G-Cter in SUMO2) cross-link involves residue Lys251. Over residues 288-300 (SPQSSENQTTVER) the composition is skewed to polar residues. Phosphoserine occurs at positions 387 and 415. Basic and acidic residues-rich tracts occupy residues 422 to 433 (TDAKRTQEEGKD), 478 to 488 (HSAEDKEDKPP), and 501 to 519 (AVER…AREE). Ser479 carries the post-translational modification Phosphoserine. The stretch at 494 to 544 (IQSEMSEAVERARKRREEEERRAREERLAACAAKLKQLDQKCRQAQKANET) forms a coiled coil. Ser555 carries the post-translational modification Phosphoserine. Low complexity predominate over residues 600 to 611 (SNSSSSSSSSSS). Residue Ser621 is modified to Phosphoserine. Residues 638-656 (QRQQQQQQQQQQQQQQQEQ) are compositionally biased toward low complexity. A Glycyl lysine isopeptide (Lys-Gly) (interchain with G-Cter in SUMO2) cross-link involves residue Lys751. The residue at position 753 (Thr753) is a Phosphothreonine. Residues Ser762 and Ser793 each carry the phosphoserine modification. Disordered regions lie at residues 792 to 847 (RSPD…EARK), 893 to 918 (EERR…IPPR), and 950 to 1080 (ALPV…PGAV). A coiled-coil region spans residues 880-904 (IEVLTKKQRRLLEEERRKKEQAAQV). Positions 960–986 (SWRTAVTAFSSTEPGTSEQGFKSSQGD) are enriched in polar residues. Positions 998–1007 (SSATSSQRSS) are enriched in low complexity. Composition is skewed to basic and acidic residues over residues 1025 to 1055 (SKAD…EHRP) and 1062 to 1074 (RSLK…EGAE). Phosphoserine occurs at positions 1070 and 1159. Disordered regions lie at residues 1177–1205 (KAWE…SSVG), 1410–1443 (QSIQ…TSRE), and 1455–1486 (ADSK…AWEP). A compositionally biased stretch (polar residues) spans 1181 to 1191 (NSPSLPEQSSP). Over residues 1410 to 1421 (QSIQLPPGQSLS) the composition is skewed to low complexity. The segment covering 1457-1474 (SKQNVPTGGSAPSPQAYR) has biased composition (polar residues).

This chain is Protein PRRC2B (Prrc2b), found in Mus musculus (Mouse).